We begin with the raw amino-acid sequence, 435 residues long: Methylenetetrahydrofolate--tRNA-(uracil-5-)-methyltransferase TrmFO (435 aa).

Residue 7–12 (GAGLAG) coordinates FAD.

Belongs to the MnmG family. TrmFO subfamily. It depends on FAD as a cofactor.

The protein localises to the cytoplasm. It carries out the reaction uridine(54) in tRNA + (6R)-5,10-methylene-5,6,7,8-tetrahydrofolate + NADH + H(+) = 5-methyluridine(54) in tRNA + (6S)-5,6,7,8-tetrahydrofolate + NAD(+). It catalyses the reaction uridine(54) in tRNA + (6R)-5,10-methylene-5,6,7,8-tetrahydrofolate + NADPH + H(+) = 5-methyluridine(54) in tRNA + (6S)-5,6,7,8-tetrahydrofolate + NADP(+). Its function is as follows. Catalyzes the folate-dependent formation of 5-methyl-uridine at position 54 (M-5-U54) in all tRNAs. This is Methylenetetrahydrofolate--tRNA-(uracil-5-)-methyltransferase TrmFO from Thermotoga petrophila (strain ATCC BAA-488 / DSM 13995 / JCM 10881 / RKU-1).